Consider the following 146-residue polypeptide: Ferredoxin-thioredoxin reductase catalytic chain, chloroplastic (146 aa).

The transit peptide at 1 to 26 directs the protein to the chloroplast; the sequence is MMSMASTTASPFCPSPMPRGRKCTVR. Cysteine 85 contacts [4Fe-4S] cluster. Cysteine 87 acts as the Nucleophile in catalysis. Cysteine 87 and cysteine 117 are disulfide-bonded. Residues cysteine 104, cysteine 106, and cysteine 115 each contribute to the [4Fe-4S] cluster site.

It belongs to the ferredoxin thioredoxin reductase beta subunit family. Heterodimer of subunit A (variable subunit) and subunit B (catalytic subunit). Heterodimeric FTR forms a complex with ferredoxin and thioredoxin. It depends on [4Fe-4S] cluster as a cofactor.

The protein localises to the plastid. It localises to the chloroplast. It carries out the reaction [thioredoxin]-disulfide + 2 reduced [2Fe-2S]-[ferredoxin] + 2 H(+) = [thioredoxin]-dithiol + 2 oxidized [2Fe-2S]-[ferredoxin]. Its function is as follows. Catalytic subunit of the ferredoxin-thioredoxin reductase (FTR), which catalyzes the two-electron reduction of thioredoxins by the electrons provided by reduced ferredoxin. The chain is Ferredoxin-thioredoxin reductase catalytic chain, chloroplastic from Oryza sativa subsp. japonica (Rice).